Reading from the N-terminus, the 207-residue chain is Outer-membrane lipoprotein LolB (207 aa).

The first 23 residues, 1-23 (MINLRRFTKFTLAGLTALSLLGG), serve as a signal peptide directing secretion. Cys24 carries the N-palmitoyl cysteine lipid modification. Cys24 carries S-diacylglycerol cysteine lipidation.

This sequence belongs to the LolB family. In terms of assembly, monomer.

It is found in the cell outer membrane. Functionally, plays a critical role in the incorporation of lipoproteins in the outer membrane after they are released by the LolA protein. The sequence is that of Outer-membrane lipoprotein LolB from Shewanella amazonensis (strain ATCC BAA-1098 / SB2B).